A 571-amino-acid polypeptide reads, in one-letter code: Dual specificity testis-specific protein kinase 2 (571 aa).

The Protein kinase domain maps to 58-313 (DFTCEKIGSG…EIGKTLEEIL (256 aa)). ATP contacts are provided by residues 64-72 (IGSGFFSEV) and lysine 87. The active-site Proton acceptor is aspartate 176. Residue serine 219 is modified to Phosphoserine; by autocatalysis. Serine 369, serine 456, and serine 460 each carry phosphoserine. The segment at 521–571 (ENGFGSRPQGTSPCPAGASEEMEVEERPAGSTPATFSTSGIGLQTQGKQDG) is disordered. Positions 552 to 571 (TPATFSTSGIGLQTQGKQDG) are enriched in polar residues.

It belongs to the protein kinase superfamily. TKL Ser/Thr protein kinase family. Mg(2+) serves as cofactor. The cofactor is Mn(2+). As to expression, predominantly expressed in testis and prostate. Found predominantly in non-germinal Sertoli cells.

It is found in the nucleus. The catalysed reaction is L-seryl-[protein] + ATP = O-phospho-L-seryl-[protein] + ADP + H(+). The enzyme catalyses L-threonyl-[protein] + ATP = O-phospho-L-threonyl-[protein] + ADP + H(+). It carries out the reaction L-tyrosyl-[protein] + ATP = O-phospho-L-tyrosyl-[protein] + ADP + H(+). Activated by autophosphorylation on Ser-219. Its function is as follows. Dual specificity protein kinase activity catalyzing autophosphorylation and phosphorylation of exogenous substrates on both serine/threonine and tyrosine residues. Phosphorylates cofilin at 'Ser-3'. May play an important role in spermatogenesis. In Homo sapiens (Human), this protein is Dual specificity testis-specific protein kinase 2 (TESK2).